The chain runs to 329 residues: uncharacterized protein (329 aa).

Residues 1–22 form the signal peptide; the sequence is MPLCNNFSGNLVVAVALFFAGA.

This is an uncharacterized protein from Arabidopsis thaliana (Mouse-ear cress).